We begin with the raw amino-acid sequence, 69 residues long: Sec-independent protein translocase protein TatA (69 aa).

A helical transmembrane segment spans residues 1-21 (MFGLGGQELILILLIILLLFG).

Belongs to the TatA/E family. Forms a complex with TatC.

It localises to the cell inner membrane. Its function is as follows. Part of the twin-arginine translocation (Tat) system that transports large folded proteins containing a characteristic twin-arginine motif in their signal peptide across membranes. TatA could form the protein-conducting channel of the Tat system. This is Sec-independent protein translocase protein TatA from Pelodictyon phaeoclathratiforme (strain DSM 5477 / BU-1).